The following is a 319-amino-acid chain: Ribonucleoside-diphosphate reductase small chain (319 aa).

Residues Asp70, Glu101, and His104 each coordinate Fe cation. Residue Tyr108 is part of the active site. Fe cation is bound by residues Glu163, Glu197, and His200. Positions 313–319 (FSLDVDF) are interaction with R1.

It belongs to the ribonucleoside diphosphate reductase small chain family. Interacts with RNR1/OPG080 subunit. Can interact with host RNR1 supunit. It depends on Fe cation as a cofactor.

It carries out the reaction a 2'-deoxyribonucleoside 5'-diphosphate + [thioredoxin]-disulfide + H2O = a ribonucleoside 5'-diphosphate + [thioredoxin]-dithiol. Ribonucleoside-diphosphate reductase holoenzyme provides the precursors necessary for viral DNA synthesis. Allows virus growth in non-dividing cells. Catalyzes the biosynthesis of deoxyribonucleotides from the corresponding ribonucleotides. The polypeptide is Ribonucleoside-diphosphate reductase small chain (OPG048) (Homo sapiens (Human)).